The chain runs to 647 residues: 1-deoxy-D-xylulose-5-phosphate synthase (647 aa).

Thiamine diphosphate contacts are provided by residues His74 and 115–117 (GHS). Asp146 contributes to the Mg(2+) binding site. Thiamine diphosphate contacts are provided by residues 147–148 (GA), Asn175, Tyr286, and Glu367. A Mg(2+)-binding site is contributed by Asn175.

The protein belongs to the transketolase family. DXPS subfamily. Homodimer. The cofactor is Mg(2+). Thiamine diphosphate serves as cofactor.

The enzyme catalyses D-glyceraldehyde 3-phosphate + pyruvate + H(+) = 1-deoxy-D-xylulose 5-phosphate + CO2. It participates in metabolic intermediate biosynthesis; 1-deoxy-D-xylulose 5-phosphate biosynthesis; 1-deoxy-D-xylulose 5-phosphate from D-glyceraldehyde 3-phosphate and pyruvate: step 1/1. In terms of biological role, catalyzes the acyloin condensation reaction between C atoms 2 and 3 of pyruvate and glyceraldehyde 3-phosphate to yield 1-deoxy-D-xylulose-5-phosphate (DXP). The chain is 1-deoxy-D-xylulose-5-phosphate synthase from Heliobacterium modesticaldum (strain ATCC 51547 / Ice1).